A 626-amino-acid polypeptide reads, in one-letter code: UPF0313 protein MM_1287 (626 aa).

Residues 206–227 are disordered; that stretch reads GKGKEKAGEQDESENATEEVAK. The Radical SAM core domain maps to 320–589; that stretch reads ALEMVKFSLT…AMQRALMHYR (270 aa). 3 residues coordinate [4Fe-4S] cluster: Cys-334, Cys-338, and Cys-341.

This sequence belongs to the UPF0313 family. [4Fe-4S] cluster is required as a cofactor.

The protein is UPF0313 protein MM_1287 of Methanosarcina mazei (strain ATCC BAA-159 / DSM 3647 / Goe1 / Go1 / JCM 11833 / OCM 88) (Methanosarcina frisia).